Here is a 154-residue protein sequence, read N- to C-terminus: Transcription antitermination protein NusB (154 aa).

The tract at residues 132–154 is disordered; the sequence is KDKQSPQSTPLDDSDKDESDQTN. Over residues 143 to 154 the composition is skewed to acidic residues; sequence DDSDKDESDQTN.

It belongs to the NusB family.

In terms of biological role, involved in transcription antitermination. Required for transcription of ribosomal RNA (rRNA) genes. Binds specifically to the boxA antiterminator sequence of the ribosomal RNA (rrn) operons. The protein is Transcription antitermination protein NusB of Bifidobacterium animalis subsp. lactis (strain AD011).